Here is a 762-residue protein sequence, read N- to C-terminus: Polyribonucleotide nucleotidyltransferase (762 aa).

Positions 531 and 537 each coordinate Mg(2+). In terms of domain architecture, KH spans 597–656; sequence PRVTTIKVPVDKIGEVIGPKGKVINSITEETRAQISIEDDGTVFVGATDGPSAQAAIDKI. An S1 motif domain is found at 668–737; that stretch reads GERFLGTVVK…KRGKISLVLV (70 aa).

It belongs to the polyribonucleotide nucleotidyltransferase family. Mg(2+) is required as a cofactor.

The protein resides in the cytoplasm. It carries out the reaction RNA(n+1) + phosphate = RNA(n) + a ribonucleoside 5'-diphosphate. Its function is as follows. Involved in mRNA degradation. Catalyzes the phosphorolysis of single-stranded polyribonucleotides processively in the 3'- to 5'-direction. This chain is Polyribonucleotide nucleotidyltransferase, found in Mycobacterium ulcerans (strain Agy99).